The primary structure comprises 249 residues: MTRYKATISYDGYAFAGFQRQSHARSVQEEIEKTLTRLNKGQAITVHGAGRTDSGVHALGQVIHFDLPYQIDEEKLRFALDTQSPEDIDVISIELVADDFHCRYAKHSKTYEFIVDRGRPKNPMRRHYATHFPYPLDVERMQIAIKKLEGTHDFTGFTASGTSVEDKVRTITEASLIVDETGQFLTFTFSGNGFLYKQIRNMVGTLLKIGNNRMPVEQIALILEKKDRQLAGPTAAPNGLYLKEIRYEE.

Asp-53 serves as the catalytic Nucleophile. Residue Tyr-111 coordinates substrate.

This sequence belongs to the tRNA pseudouridine synthase TruA family. Homodimer.

The enzyme catalyses uridine(38/39/40) in tRNA = pseudouridine(38/39/40) in tRNA. Functionally, formation of pseudouridine at positions 38, 39 and 40 in the anticodon stem and loop of transfer RNAs. This chain is tRNA pseudouridine synthase A, found in Streptococcus pneumoniae (strain P1031).